The primary structure comprises 540 residues: Mitochondrial distribution and morphology protein 34 (540 aa).

The SMP-LTD domain maps to 1–208; that stretch reads MSFKFNSGTF…LPSVIFNMSQ (208 aa). Disordered regions lie at residues 26-51 and 379-399; these read ALNP…KKPK and RSKS…SGSL. A compositionally biased stretch (polar residues) spans 35–44; sequence PESTSGQDGS.

It belongs to the MDM34 family. Component of the ER-mitochondria encounter structure (ERMES) or MDM complex, composed of MMM1, MDM10, MDM12 and MDM34.

The protein localises to the mitochondrion outer membrane. In terms of biological role, component of the ERMES/MDM complex, which serves as a molecular tether to connect the endoplasmic reticulum (ER) and mitochondria. Components of this complex are involved in the control of mitochondrial shape and protein biogenesis, and function in nonvesicular lipid trafficking between the ER and mitochondria. MDM34 is required for the interaction of the ER-resident membrane protein MMM1 and the outer mitochondrial membrane-resident beta-barrel protein MDM10. This Kluyveromyces lactis (strain ATCC 8585 / CBS 2359 / DSM 70799 / NBRC 1267 / NRRL Y-1140 / WM37) (Yeast) protein is Mitochondrial distribution and morphology protein 34.